Consider the following 424-residue polypeptide: Serine--tRNA ligase (424 aa).

Residue 230-232 (TAE) coordinates L-serine. 261-263 (RSE) provides a ligand contact to ATP. Residue E284 coordinates L-serine. 348-351 (EISS) contacts ATP. S384 is an L-serine binding site.

It belongs to the class-II aminoacyl-tRNA synthetase family. Type-1 seryl-tRNA synthetase subfamily. Homodimer. The tRNA molecule binds across the dimer.

The protein resides in the cytoplasm. It carries out the reaction tRNA(Ser) + L-serine + ATP = L-seryl-tRNA(Ser) + AMP + diphosphate + H(+). The catalysed reaction is tRNA(Sec) + L-serine + ATP = L-seryl-tRNA(Sec) + AMP + diphosphate + H(+). The protein operates within aminoacyl-tRNA biosynthesis; selenocysteinyl-tRNA(Sec) biosynthesis; L-seryl-tRNA(Sec) from L-serine and tRNA(Sec): step 1/1. In terms of biological role, catalyzes the attachment of serine to tRNA(Ser). Is also able to aminoacylate tRNA(Sec) with serine, to form the misacylated tRNA L-seryl-tRNA(Sec), which will be further converted into selenocysteinyl-tRNA(Sec). In Streptococcus pneumoniae (strain 70585), this protein is Serine--tRNA ligase.